The primary structure comprises 243 residues: Flavin-dependent thymidylate synthase (243 aa).

The ThyX domain occupies 2–207 (VKVKLINYTP…ELKPIIEWAK (206 aa)). FAD is bound by residues S56, 80 to 82 (RHR), and Q88. DUMP contacts are provided by residues 77-80 (QLVR), 88-92 (QQSQR), and R146. The ThyX motif signature appears at 80–90 (RHRIASYTQQS). FAD contacts are provided by residues 162-164 (NLR) and H168. R173 is a dUMP binding site. Residue R173 is the Involved in ionization of N3 of dUMP, leading to its activation of the active site.

The protein belongs to the thymidylate synthase ThyX family. As to quaternary structure, homotetramer. The cofactor is FAD.

It carries out the reaction dUMP + (6R)-5,10-methylene-5,6,7,8-tetrahydrofolate + NADPH + H(+) = dTMP + (6S)-5,6,7,8-tetrahydrofolate + NADP(+). It functions in the pathway pyrimidine metabolism; dTTP biosynthesis. In terms of biological role, catalyzes the reductive methylation of 2'-deoxyuridine-5'-monophosphate (dUMP) to 2'-deoxythymidine-5'-monophosphate (dTMP) while utilizing 5,10-methylenetetrahydrofolate (mTHF) as the methyl donor, and NADPH and FADH(2) as the reductant. This is Flavin-dependent thymidylate synthase from Pyrococcus horikoshii (strain ATCC 700860 / DSM 12428 / JCM 9974 / NBRC 100139 / OT-3).